We begin with the raw amino-acid sequence, 294 residues long: ATP synthase gamma chain (294 aa).

It belongs to the ATPase gamma chain family. As to quaternary structure, F-type ATPases have 2 components, CF(1) - the catalytic core - and CF(0) - the membrane proton channel. CF(1) has five subunits: alpha(3), beta(3), gamma(1), delta(1), epsilon(1). CF(0) has three main subunits: a, b and c.

It is found in the cell inner membrane. In terms of biological role, produces ATP from ADP in the presence of a proton gradient across the membrane. The gamma chain is believed to be important in regulating ATPase activity and the flow of protons through the CF(0) complex. The protein is ATP synthase gamma chain of Rhizobium johnstonii (strain DSM 114642 / LMG 32736 / 3841) (Rhizobium leguminosarum bv. viciae).